Reading from the N-terminus, the 471-residue chain is Glutamate--tRNA ligase (471 aa).

The short motif at 9-19 (PSPTGYLHVGG) is the 'HIGH' region element. Zn(2+) is bound by residues C98, C100, C125, and H127. The 'KMSKS' region signature appears at 237-241 (KLSKR). K240 is an ATP binding site.

This sequence belongs to the class-I aminoacyl-tRNA synthetase family. Glutamate--tRNA ligase type 1 subfamily. As to quaternary structure, monomer. It depends on Zn(2+) as a cofactor.

It is found in the cytoplasm. It catalyses the reaction tRNA(Glu) + L-glutamate + ATP = L-glutamyl-tRNA(Glu) + AMP + diphosphate. Its function is as follows. Catalyzes the attachment of glutamate to tRNA(Glu) in a two-step reaction: glutamate is first activated by ATP to form Glu-AMP and then transferred to the acceptor end of tRNA(Glu). This chain is Glutamate--tRNA ligase, found in Shigella boydii serotype 18 (strain CDC 3083-94 / BS512).